A 174-amino-acid polypeptide reads, in one-letter code: Methylated protein MJ0556 (174 aa).

CBS domains lie at 28–87 and 91–156; these read MISG…YLNV and MLKN…IIKE.

Post-translationally, methylated at an undetermined residue between Ser-2 and Asp-26.

The sequence is that of Methylated protein MJ0556 from Methanocaldococcus jannaschii (strain ATCC 43067 / DSM 2661 / JAL-1 / JCM 10045 / NBRC 100440) (Methanococcus jannaschii).